The sequence spans 58 residues: MTVSYSIYLENSLHFGDALLAKLPEAYAIFDPIVDVMPVIPVFFLLLAFVWQAAVSFR.

The propeptide occupies 1 to 21 (MTVSYSIYLENSLHFGDALLA). The helical transmembrane segment at 29 to 49 (IFDPIVDVMPVIPVFFLLLAF) threads the bilayer.

This sequence belongs to the PsbK family. PSII is composed of 1 copy each of membrane proteins PsbA, PsbB, PsbC, PsbD, PsbE, PsbF, PsbH, PsbI, PsbJ, PsbK, PsbL, PsbM, PsbT, PsbX, PsbY, PsbZ, Psb30/Ycf12, at least 3 peripheral proteins of the oxygen-evolving complex and a large number of cofactors. It forms dimeric complexes.

The protein localises to the plastid. It is found in the chloroplast thylakoid membrane. Its function is as follows. One of the components of the core complex of photosystem II (PSII). PSII is a light-driven water:plastoquinone oxidoreductase that uses light energy to abstract electrons from H(2)O, generating O(2) and a proton gradient subsequently used for ATP formation. It consists of a core antenna complex that captures photons, and an electron transfer chain that converts photonic excitation into a charge separation. The chain is Photosystem II reaction center protein K from Adiantum capillus-veneris (Maidenhair fern).